Here is a 439-residue protein sequence, read N- to C-terminus: Probable aspartic-type endopeptidase AFUA_3G01220 (439 aa).

Residues 1–20 (MHFSIGSLFLYLIASASCTA) form the signal peptide. The segment at 31–50 (RTPFTTSTSKPSAFTNPSTD) is disordered. The segment covering 32–45 (TPFTTSTSKPSAFT) has biased composition (low complexity). One can recognise a Peptidase A1 domain in the interval 95-436 (FATSINIGNQ…DVGAAEMRFA (342 aa)). An N-linked (GlcNAc...) asparagine glycan is attached at asparagine 103. Aspartate 111 is an active-site residue. Asparagine 149, asparagine 178, asparagine 187, asparagine 253, asparagine 256, asparagine 276, and asparagine 308 each carry an N-linked (GlcNAc...) asparagine glycan. Aspartate 323 is an active-site residue. 2 N-linked (GlcNAc...) asparagine glycosylation sites follow: asparagine 361 and asparagine 394.

This sequence belongs to the peptidase A1 family.

The protein resides in the secreted. In terms of biological role, probable aspartic-type endopeptidase which contributes to virulence. This Aspergillus fumigatus (strain ATCC MYA-4609 / CBS 101355 / FGSC A1100 / Af293) (Neosartorya fumigata) protein is Probable aspartic-type endopeptidase AFUA_3G01220.